Reading from the N-terminus, the 97-residue chain is Plastocyanin A/B (97 aa).

The region spanning 1 to 97 (AEVKLGSDDG…AGMKGEVTVN (97 aa)) is the Plastocyanin-like domain. Residues His-37, Cys-82, His-85, and Met-90 each coordinate Cu cation.

Belongs to the plastocyanin family. Cu(2+) serves as cofactor.

Its subcellular location is the plastid. The protein resides in the chloroplast thylakoid membrane. Its function is as follows. Participates in electron transfer between P700 and the cytochrome b6-f complex in photosystem I. The polypeptide is Plastocyanin A/B (PETE) (Petroselinum crispum (Parsley)).